A 406-amino-acid polypeptide reads, in one-letter code: Phloroisovalerophenone synthase (406 aa).

Cys171 is an active-site residue.

The protein belongs to the thiolase-like superfamily. Chalcone/stilbene synthases family.

It carries out the reaction 3-methylbutanoyl-CoA + 3 malonyl-CoA + 3 H(+) = phlorisovalerophenone + 3 CO2 + 4 CoA. Its function is as follows. Produces 3-methyl-1-(2,4,6-trihydroxyphenyl)butan-1-one (phloroisovalerophenone). The protein is Phloroisovalerophenone synthase (VPS) of Psilotum nudum (Whisk fern).